Reading from the N-terminus, the 407-residue chain is MGVISPTETLFLKSQHRLLQPRNYSYALAFHSTRRVANFPRNSFSSLGSCSVDFPLRSNPISQNSKSIHPWRRYVSESDSNELYHKKVSSIMETLKQAYSFIPHGILLSTILALVYPPSFTWFKPRYFVPGLGFMMFAVGINSNERDFLEALKRPDAIFAGYIGQYLIKPLLGYIFGVIAVSLFNLPTSIGAGIMLVSCVSGAQLSNYTTFLTDPSLAALSIVMTSISTATAVLVTPMLSLLLIGKKLPVDVFGMISSILQVVITPIAAGLLLNRLFPRLSNAIKPFLPALTVIDMSCCIGAPLALNIDSILSPFGATILFLVITFHLLAFVAGYFFTGFFFSKAPDVKALQRTISYETGMQSSLLALALATKFFQDPLVGVPPAISTVVMSLMGVSLVTIWKNRKE.

The transit peptide at 1–57 (MGVISPTETLFLKSQHRLLQPRNYSYALAFHSTRRVANFPRNSFSSLGSCSVDFPLR) directs the protein to the chloroplast. Helical transmembrane passes span 101-121 (FIPH…PSFT), 122-142 (WFKP…VGIN), 162-184 (YIGQ…VSLF), 191-213 (GAGI…TFLT), 222-242 (IVMT…LSLL), 252-272 (VFGM…AGLL), 286-306 (PFLP…PLAL), 317-337 (ATIL…GYFF), and 379-399 (LVGV…VSLV).

The protein belongs to the bile acid:sodium symporter (BASS) (TC 2.A.28) family. As to expression, widely expressed.

Its subcellular location is the membrane. It localises to the plastid. The protein resides in the chloroplast envelope. Plastidic transporter involved in the biosynthesis of aliphatic glucosinolates by translocating the biosynthetic intermediates of Met-derived glucosinolates across chloroplast membranes. Transports short chain (C2) alpha-keto acids, such as 4-methylsulfanyl-2-oxobutanoic acid, from the cytosol to the chloroplast where they are subjected to chain elongation cycles. Also functions in the transport of chain-elongated (C3 to C8) Met derivatives from the chloroplast to the cytosol. Does not seem to be involved in the transport of indole-derived glucosinolates. The protein is Probable sodium/metabolite cotransporter BASS5, chloroplastic (BASS5) of Arabidopsis thaliana (Mouse-ear cress).